The primary structure comprises 337 residues: Glyceraldehyde-3-phosphate dehydrogenase (337 aa).

Residues 11–12 (TI) and Gly-110 contribute to the NAD(+) site. 139–141 (SCN) is a D-glyceraldehyde 3-phosphate binding site. Cys-140 functions as the Nucleophile in the catalytic mechanism. Arg-168 provides a ligand contact to NAD(+). 194–195 (HG) is a D-glyceraldehyde 3-phosphate binding site. An NAD(+)-binding site is contributed by Gln-301.

Belongs to the glyceraldehyde-3-phosphate dehydrogenase family. In terms of assembly, homotetramer.

The protein localises to the cytoplasm. It carries out the reaction D-glyceraldehyde 3-phosphate + phosphate + NADP(+) = (2R)-3-phospho-glyceroyl phosphate + NADPH + H(+). The catalysed reaction is D-glyceraldehyde 3-phosphate + phosphate + NAD(+) = (2R)-3-phospho-glyceroyl phosphate + NADH + H(+). Its pathway is carbohydrate degradation; glycolysis; pyruvate from D-glyceraldehyde 3-phosphate: step 1/5. This is Glyceraldehyde-3-phosphate dehydrogenase (gap) from Methanothermobacter thermautotrophicus (strain ATCC 29096 / DSM 1053 / JCM 10044 / NBRC 100330 / Delta H) (Methanobacterium thermoautotrophicum).